The following is a 715-amino-acid chain: Polyribonucleotide nucleotidyltransferase (715 aa).

Residues Asp-488 and Asp-494 each coordinate Mg(2+). One can recognise a KH domain in the interval 555-614 (PRIEVMHIPTDKIRDVIGTGGKVIREIVEKTGAKINIEDDGTVKIASSNGKEIEAARKWI). The S1 motif domain maps to 624 to 692 (GEIYEGTVVK…ERGKVRLSMK (69 aa)).

This sequence belongs to the polyribonucleotide nucleotidyltransferase family. Requires Mg(2+) as cofactor.

Its subcellular location is the cytoplasm. It carries out the reaction RNA(n+1) + phosphate = RNA(n) + a ribonucleoside 5'-diphosphate. Its function is as follows. Involved in mRNA degradation. Catalyzes the phosphorolysis of single-stranded polyribonucleotides processively in the 3'- to 5'-direction. This is Polyribonucleotide nucleotidyltransferase from Chelativorans sp. (strain BNC1).